Reading from the N-terminus, the 408-residue chain is Cytochrome bc1 complex Rieske iron-sulfur subunit (408 aa).

The next 3 membrane-spanning stretches (helical) occupy residues 56 to 76, 98 to 118, and 166 to 186; these read VGIWAALGILGGIGFLITYIF, MLGITSGLCIISLGIAGVLYV, and LLAGGAVMAGLTIVAPLGGMI. Residues 293-390 enclose the Rieske domain; that stretch reads HGPRNAVMLI…ITVDEEGYLI (98 aa). The [2Fe-2S] cluster site is built by C333, H335, C352, and H355. Residues C338 and C354 are joined by a disulfide bond.

The protein belongs to the Rieske iron-sulfur protein family. In terms of assembly, the cytochrome bc1 complex is composed of a cytochrome b (QcrB), the Rieske iron-sulfur protein (QcrA) and a diheme cytochrome c (QcrC) subunit. The bc1 complex forms a supercomplex with cytochrome c oxidase (cytochrome aa3). It depends on [2Fe-2S] cluster as a cofactor.

Its subcellular location is the cell membrane. In terms of biological role, iron-sulfur subunit of the cytochrome bc1 complex, an essential component of the respiratory electron transport chain required for ATP synthesis. The bc1 complex catalyzes the oxidation of menaquinol and the reduction of cytochrome c in the respiratory chain. The bc1 complex operates through a Q-cycle mechanism that couples electron transfer to generation of the proton gradient that drives ATP synthesis. This Corynebacterium efficiens (strain DSM 44549 / YS-314 / AJ 12310 / JCM 11189 / NBRC 100395) protein is Cytochrome bc1 complex Rieske iron-sulfur subunit (qcrA).